A 696-amino-acid polypeptide reads, in one-letter code: PWWP domain-containing DNA repair factor 3B (696 aa).

Polar residues-rich tracts occupy residues 119–128 (QNVPQKQSDS) and 290–300 (CLDTSQNQPSM). Disordered regions lie at residues 119-143 (QNVP…DLPG) and 278-303 (NIED…MESE). S128 carries the phosphoserine modification. Residues 392–453 (TGMIVWFKYQ…KKFDCKEKQM (62 aa)) enclose the PWWP domain.

This sequence belongs to the PWWP3A family.

The polypeptide is PWWP domain-containing DNA repair factor 3B (Homo sapiens (Human)).